We begin with the raw amino-acid sequence, 352 residues long: MAVVMDGVKKNIIDRTIPNLVKKFQNFNNDDIAYFLKLLHETGIDLFEINRDSMDKIKKFPLNLDYIYRIENIEDYNYLNNYNFKYIILNYKTIYRFLLEDEKIQKNLKEHNIILEIDIEDLDELYLSEDNKIFCIFNIVCLRINNLSKLDFIDEDFRIKDLKSKFNVLVDFCASNKYNMATAIIINAFLNGSDIITTEFNSNDYAAMEEVIIALKSIRNIEIRGDLKLISKLTRIYEKITSERVYSMKPILGEDIFKYESGIHADGIAKNPKNYEPFNPELIGTNRKLYIGKHSGKAALVVKFKELNLNCNNIDMNLFLQDIREKSIQEKRNVLDNEIIEMYKEYNKSYQR.

This sequence belongs to the alpha-IPM synthase/homocitrate synthase family. Heterodimer of an alpha and an omega chain.

It carries out the reaction acetyl-CoA + 2-oxoglutarate + H2O = (2R)-homocitrate + CoA + H(+). Its function is as follows. This protein is a Fe-Mo-cofactor biosynthetic component. This chain is Homocitrate synthase, omega subunit (nifV-OMEGA), found in Clostridium pasteurianum.